A 518-amino-acid chain; its full sequence is Protein translocase subunit SecD (518 aa).

Helical transmembrane passes span 9–29 (IFLS…NFMQ), 361–381 (LIGF…LGLF), 384–404 (IALS…QATL), 406–426 (LPGI…NVLI), 452–474 (FATI…IFGV), and 486–506 (IGII…IDIW).

The protein belongs to the SecD/SecF family. SecD subfamily. As to quaternary structure, forms a complex with SecF. Part of the essential Sec protein translocation apparatus which comprises SecA, SecYEG and auxiliary proteins SecDF-YajC and YidC.

It is found in the cell inner membrane. Its function is as follows. Part of the Sec protein translocase complex. Interacts with the SecYEG preprotein conducting channel. SecDF uses the proton motive force (PMF) to complete protein translocation after the ATP-dependent function of SecA. In Rickettsia felis (strain ATCC VR-1525 / URRWXCal2) (Rickettsia azadi), this protein is Protein translocase subunit SecD.